Consider the following 32-residue polypeptide: Hainantoxin F8-35.23 (32 aa).

Expressed by the venom gland.

It localises to the secreted. The chain is Hainantoxin F8-35.23 from Cyriopagopus hainanus (Chinese bird spider).